The sequence spans 177 residues: MNTKIRYGLSAAVLALIGAGASAPQILDQFLDEKEGNHTMAYRDGSGIWTICRGATVVDGKTVFPNMKLSKEKCDQVNAIERDKALAWVERNIKVPLTEPQKAGIASFCPYNIGPGKCFPSTFYKRLNAGDRKGACEAIRWWIKDGGRDCRIRSNNCYGQVIRRDQESALTCWGIEQ.

Residue glutamate 35 is the Proton donor of the active site. Aspartate 44 serves as the catalytic Nucleophile.

The protein belongs to the glycosyl hydrolase 24 family.

It catalyses the reaction Hydrolysis of (1-&gt;4)-beta-linkages between N-acetylmuramic acid and N-acetyl-D-glucosamine residues in a peptidoglycan and between N-acetyl-D-glucosamine residues in chitodextrins.. Essential for lysis of bacterial cell wall, by showing cell wall hydrolyzing activity. The protein is Probable prophage lysozyme (rrrQ) of Escherichia coli (strain K12).